The following is a 626-amino-acid chain: Serine/threonine-protein kinase PknH (626 aa).

The Cytoplasmic segment spans residues 1-403 (MSDAQDSRVG…QTPRKTNPWP (403 aa)). Residues 16–276 (YHLKRLLGRG…DLALAAHEAL (261 aa)) form the Protein kinase domain. ATP-binding positions include 22–30 (LGRGGMGEV) and Lys-45. The Proton acceptor role is filled by Asp-139. A Phosphothreonine modification is found at Thr-170. The tract at residues 292–396 (QESTLPAPPK…GGPSPWAQTP (105 aa)) is disordered. Composition is skewed to pro residues over residues 297–308 (PAPPKPVPPPTM) and 316–342 (RQPP…PAQP). Residues 343–355 (GPAGQRPGPTGQP) are compositionally biased toward low complexity. The helical transmembrane segment at 404–424 (LVAGAAAVVLVLVLGAIGIWI) threads the bilayer. Topologically, residues 425-626 (AIRPKPVQPP…AKIVDKVNKE (202 aa)) are extracellular. Disulfide bonds link Cys-482–Cys-545 and Cys-587–Cys-604.

It belongs to the protein kinase superfamily. Ser/Thr protein kinase family. Requires a divalent metal cation as cofactor. In terms of processing, autophosphorylated on threonine and serine residues. Dephosphorylated by PstP.

It localises to the cell membrane. The enzyme catalyses L-seryl-[protein] + ATP = O-phospho-L-seryl-[protein] + ADP + H(+). It carries out the reaction L-threonyl-[protein] + ATP = O-phospho-L-threonyl-[protein] + ADP + H(+). Inhibited by the kinase inhibitors staurosporine and H-7. May regulate bacterial growth in response to external signals to facilitate adaptation to the host environment. In vitro, phosphorylates several substrates such as EmbR, DevR (DosR), DacB1 and Rv0681. The protein is Serine/threonine-protein kinase PknH (pknH) of Mycobacterium tuberculosis (strain ATCC 25618 / H37Rv).